Reading from the N-terminus, the 42-residue chain is Potassium channel toxin gamma-KTx 1.5 (42 aa).

Intrachain disulfides connect Cys5–Cys23, Cys11–Cys34, Cys20–Cys39, and Cys24–Cys41.

Belongs to the ergtoxin family. Gamma-KTx 1 subfamily. Expressed by the venom gland.

It is found in the secreted. Blocks Kv11/ERG potassium channels. The sequence is that of Potassium channel toxin gamma-KTx 1.5 from Centruroides limpidus (Mexican scorpion).